The following is a 154-amino-acid chain: uncharacterized protein (154 aa).

The protein resides in the mitochondrion. This is an uncharacterized protein from Arabidopsis thaliana (Mouse-ear cress).